A 455-amino-acid polypeptide reads, in one-letter code: Immunoglobulin alpha-2 heavy chain (455 aa).

Ig-like domains follow at residues 1-95, 121-213, 227-322, and 330-432; these read EVQL…VYYC, PKVF…QDVT, PRLS…ANIT, and PEVH…KTID. Residues 1 to 115 are variable (V) domain, involved in antigen recognition; that stretch reads EVQLVETGGG…GKGTTVTVSS (115 aa). 2 disulfide bridges follow: C22–C95 and C141–C200. The segment at 116–455 is constant (C) domain; it reads ASPTSPKVFP…VMAEADGTCY (340 aa). Residues N162, N207, and N246 are each glycosylated (N-linked (GlcNAc...) asparagine). 2 disulfide bridges follow: C225/C282 and C249/C306. A glycan (N-linked (GlcNAc...) asparagine) is linked at N320. C352 and C415 form a disulfide bridge. Residue N442 is glycosylated (N-linked (GlcNAc...) asparagine).

Immunoglobulins are composed of two identical heavy chains and two identical light chains; disulfide-linked. Monomeric or polymeric.

Its subcellular location is the secreted. The protein resides in the cell membrane. In terms of biological role, immunoglobulins, also known as antibodies, are membrane-bound or secreted glycoproteins produced by B lymphocytes. In the recognition phase of humoral immunity, the membrane-bound immunoglobulins serve as receptors which, upon binding of a specific antigen, trigger the clonal expansion and differentiation of B lymphocytes into immunoglobulins-secreting plasma cells. Secreted immunoglobulins mediate the effector phase of humoral immunity, which results in the elimination of bound antigens. The antigen binding site is formed by the variable domain of one heavy chain, together with that of its associated light chain. Thus, each immunoglobulin has two antigen binding sites with remarkable affinity for a particular antigen. The variable domains are assembled by a process called V-(D)-J rearrangement and can then be subjected to somatic hypermutations which, after exposure to antigen and selection, allow affinity maturation for a particular antigen. Ig alpha is the major immunoglobulin class in body secretions. This chain is Immunoglobulin alpha-2 heavy chain, found in Homo sapiens (Human).